A 211-amino-acid polypeptide reads, in one-letter code: Urease accessory protein UreG (211 aa).

Residue 12-19 coordinates GTP; it reads GPVGAGKT.

It belongs to the SIMIBI class G3E GTPase family. UreG subfamily. In terms of assembly, homodimer. UreD, UreF and UreG form a complex that acts as a GTP-hydrolysis-dependent molecular chaperone, activating the urease apoprotein by helping to assemble the nickel containing metallocenter of UreC. The UreE protein probably delivers the nickel.

Its subcellular location is the cytoplasm. In terms of biological role, facilitates the functional incorporation of the urease nickel metallocenter. This process requires GTP hydrolysis, probably effectuated by UreG. The chain is Urease accessory protein UreG from Paracoccus denitrificans (strain Pd 1222).